The primary structure comprises 691 residues: Guanylate cyclase soluble subunit alpha-1 (691 aa).

Positions 26-65 are disordered; that stretch reads PREPLGEATGSGPASTPGQPGVCPGVPDKNPPGRLPRRKT. Residues 482-609 enclose the Guanylate cyclase domain; the sequence is TMLFSDIVGF…NNVTLANKFE (128 aa).

The protein belongs to the adenylyl cyclase class-4/guanylyl cyclase family. In terms of assembly, heterodimer of an alpha and a beta chain.

It localises to the cytoplasm. The catalysed reaction is GTP = 3',5'-cyclic GMP + diphosphate. Its activity is regulated as follows. Activated by nitric oxide in the presence of magnesium or manganese ions. In Bos taurus (Bovine), this protein is Guanylate cyclase soluble subunit alpha-1 (GUCY1A1).